The sequence spans 238 residues: Purine nucleoside phosphorylase DeoD-type 1 (238 aa).

His5 contacts a purine D-ribonucleoside. Phosphate contacts are provided by residues Gly21, Arg25, Arg44, and 88–91; that span reads RVGS. A purine D-ribonucleoside-binding positions include 180 to 182 and 204 to 205; these read EME and SD. The active-site Proton donor is the Asp205.

The protein belongs to the PNP/UDP phosphorylase family. As to quaternary structure, homohexamer; trimer of homodimers.

The enzyme catalyses a purine D-ribonucleoside + phosphate = a purine nucleobase + alpha-D-ribose 1-phosphate. It catalyses the reaction a purine 2'-deoxy-D-ribonucleoside + phosphate = a purine nucleobase + 2-deoxy-alpha-D-ribose 1-phosphate. Functionally, catalyzes the reversible phosphorolytic breakdown of the N-glycosidic bond in the beta-(deoxy)ribonucleoside molecules, with the formation of the corresponding free purine bases and pentose-1-phosphate. In Aliivibrio fischeri (strain ATCC 700601 / ES114) (Vibrio fischeri), this protein is Purine nucleoside phosphorylase DeoD-type 1.